The sequence spans 435 residues: Putative F-box/kelch-repeat protein At1g20790 (435 aa).

The region spanning 1 to 49 (MKRLPLHLLDEILFNLDPKSLGKMRCTNKSINTHISDDPNFKFEYFSRI) is the F-box domain. Kelch repeat units lie at residues 192–238 (PVYV…CTGD) and 280–335 (LYWN…LFKP).

The sequence is that of Putative F-box/kelch-repeat protein At1g20790 from Arabidopsis thaliana (Mouse-ear cress).